A 239-amino-acid chain; its full sequence is Ribonuclease HII (239 aa).

An RNase H type-2 domain is found at 18-231 (KIIVGLDEAG…SKNLLKEIEE (214 aa)). Positions 24, 25, and 125 each coordinate a divalent metal cation.

This sequence belongs to the RNase HII family. Mn(2+) is required as a cofactor. The cofactor is Mg(2+).

It is found in the cytoplasm. The catalysed reaction is Endonucleolytic cleavage to 5'-phosphomonoester.. Endonuclease that specifically degrades the RNA of RNA-DNA hybrids. This is Ribonuclease HII from Methanococcus maripaludis (strain C5 / ATCC BAA-1333).